Reading from the N-terminus, the 186-residue chain is Thymidine kinase (186 aa).

ATP is bound at residue Gly-8–Thr-15. Catalysis depends on Glu-86, which acts as the Proton acceptor. A substrate-binding site is contributed by Phe-118. Zn(2+)-binding residues include Cys-143 and Cys-146. Ile-162–Gly-166 serves as a coordination point for substrate. Residues Cys-175 and Cys-178 each coordinate Zn(2+).

Belongs to the thymidine kinase family.

It carries out the reaction thymidine + ATP = dTMP + ADP + H(+). This Choristoneura fumiferana (Spruce budworm moth) protein is Thymidine kinase (TK).